The primary structure comprises 57 residues: uncharacterized protein (57 aa).

It is found in the plastid. This is an uncharacterized protein from Euglena longa (Euglenophycean alga).